Here is a 787-residue protein sequence, read N- to C-terminus: PAN2-PAN3 deadenylation complex subunit pan3 (787 aa).

Positions 1–20 are disordered; sequence MNSGLTPSPSPAVAAAGPAG. Residues 11–20 are compositionally biased toward low complexity; that stretch reads PAVAAAGPAG. The C3H1-type zinc-finger motif lies at 23 to 51; it reads GSKLKFCRYYAKDRTCFYGDECQFLHDDQ. 3 disordered regions span residues 131-162, 179-210, and 226-291; these read EATY…AAHD, TMSQ…MSQS, and GGPT…PPST. 2 stretches are compositionally biased toward low complexity: residues 143-154 and 200-210; these read NSSSSPSLLNDS and STSRLSNMSQS. Residues 185-200 carry the PABPC-interacting motif-2 (PAM-2) motif; that stretch reads KTPNPTASEFIPKGGS. Positions 265-290 are enriched in polar residues; that stretch reads TPNPANYMVPTSASTPVTNSVSQPPS. The interval 365-650 is pseudokinase domain; sequence QIDQADMPGV…SVNDIMPMIG (286 aa). Residues Arg-422, 471 to 478, and 545 to 546 each bind ATP; these read DFHAGSET and TK. A coiled-coil region spans residues 651–689; sequence ARFYTQLDAAQMRNDVIEEDLAKEVQNGRLFRLLAKLGT. The tract at residues 690 to 787 is knob domain; it reads INERPEFQKD…ELVAAANGQL (98 aa).

The protein belongs to the protein kinase superfamily. PAN3 family. In terms of assembly, homodimer. Forms a heterotrimer with a catalytic subunit pan2 to form the poly(A)-nuclease (PAN) deadenylation complex. Interacts (via PAM-2 motif) with poly(A)-binding protein pabpc1 (via PABC domain), conferring substrate specificity of the enzyme complex. Interacts with the GW182 family proteins tnrc6a, tnrc6b and tnrc6c.

It is found in the cytoplasm. The protein resides in the P-body. Functionally, regulatory subunit of the poly(A)-nuclease (PAN) deadenylation complex, one of two cytoplasmic mRNA deadenylases involved in general and miRNA-mediated mRNA turnover. PAN specifically shortens poly(A) tails of RNA and the activity is stimulated by poly(A)-binding protein (PABP). PAN deadenylation is followed by rapid degradation of the shortened mRNA tails by the CCR4-NOT complex. Deadenylated mRNAs are then degraded by two alternative mechanisms, namely exosome-mediated 3'-5' exonucleolytic degradation, or deadenylation-dependent mRNA decaping and subsequent 5'-3' exonucleolytic degradation by XRN1. PAN3 acts as a positive regulator for PAN activity, recruiting the catalytic subunit PAN2 to mRNA via its interaction with RNA and PABP, and to miRNA targets via its interaction with GW182 family proteins. This is PAN2-PAN3 deadenylation complex subunit pan3 from Xenopus tropicalis (Western clawed frog).